Consider the following 137-residue polypeptide: uncharacterized protein (137 aa).

This is an uncharacterized protein from Saccharomyces cerevisiae (strain ATCC 204508 / S288c) (Baker's yeast).